Consider the following 90-residue polypeptide: Small ribosomal subunit protein uS15c (90 aa).

This sequence belongs to the universal ribosomal protein uS15 family. In terms of assembly, part of the 30S ribosomal subunit.

The protein resides in the plastid. Its subcellular location is the chloroplast. The chain is Small ribosomal subunit protein uS15c (rps15) from Panax ginseng (Korean ginseng).